The chain runs to 131 residues: Snaclec A13 (131 aa).

3 disulfides stabilise this stretch: C4–C15, C32–C125, and C100–C117. Positions 11–126 (YEGHCYKVFN…CELAYHFICM (116 aa)) constitute a C-type lectin domain.

Belongs to the snaclec family. Heterodimer; disulfide-linked. In terms of tissue distribution, expressed by the venom gland.

The protein resides in the secreted. Its function is as follows. Interferes with one step of hemostasis (modulation of platelet aggregation, or coagulation cascade, for example). The chain is Snaclec A13 from Macrovipera lebetinus (Levantine viper).